The chain runs to 480 residues: Glutamyl-tRNA(Gln) amidotransferase subunit A (480 aa).

Residues Lys76 and Ser151 each act as charge relay system in the active site. Catalysis depends on Ser175, which acts as the Acyl-ester intermediate.

The protein belongs to the amidase family. GatA subfamily. In terms of assembly, heterotrimer of A, B and C subunits.

The enzyme catalyses L-glutamyl-tRNA(Gln) + L-glutamine + ATP + H2O = L-glutaminyl-tRNA(Gln) + L-glutamate + ADP + phosphate + H(+). In terms of biological role, allows the formation of correctly charged Gln-tRNA(Gln) through the transamidation of misacylated Glu-tRNA(Gln) in organisms which lack glutaminyl-tRNA synthetase. The reaction takes place in the presence of glutamine and ATP through an activated gamma-phospho-Glu-tRNA(Gln). The polypeptide is Glutamyl-tRNA(Gln) amidotransferase subunit A (Exiguobacterium sp. (strain ATCC BAA-1283 / AT1b)).